Reading from the N-terminus, the 289-residue chain is Phospholipase C (289 aa).

Positions 1-25 are cleaved as a signal peptide; it reads MKFKKVVLGMCLIASVLVFPVTIKA. Positions 26-51 are excised as a propeptide; the sequence is NACCDEYLQTPAAPHDIDSKLPHKLS. Residues tryptophan 52, histidine 65, aspartate 106, histidine 120, histidine 169, aspartate 173, histidine 179, histidine 193, and glutamate 197 each coordinate Zn(2+). The region spanning 52-289 is the Zn-dependent PLC domain; sequence WSADNPTNTD…LEFWSKKTNE (238 aa).

It belongs to the bacterial zinc-metallophospholipase C family. Forms monomers, dimers and higher order oligomers, but only the monomer is enzymatically active. The cofactor is Zn(2+).

It localises to the secreted. The catalysed reaction is a 1,2-diacyl-sn-glycero-3-phosphocholine + H2O = phosphocholine + a 1,2-diacyl-sn-glycerol + H(+). The enzyme catalyses 1,2-dihexadecanoyl-sn-glycero-3-phosphocholine + H2O = 1,2-dihexadecanoyl-sn-glycerol + phosphocholine + H(+). It carries out the reaction 1-hexadecanoyl-2-(9Z-octadecenoyl)-sn-glycero-3-phosphocholine + H2O = 1-hexadecanoyl-2-(9Z-octadecenoyl)-sn-glycerol + phosphocholine + H(+). It catalyses the reaction 1,2-di-(9Z-octadecenoyl)-sn-glycero-3-phosphocholine + H2O = 1,2-di-(9Z-octadecenoyl)-sn-glycerol + phosphocholine + H(+). The catalysed reaction is a 1,2-diacyl-sn-glycero-3-phosphoethanolamine + H2O = phosphoethanolamine + a 1,2-diacyl-sn-glycerol + H(+). The enzyme catalyses 1,2-di-(9Z-octadecenoyl)-sn-glycero-3-phosphoethanolamine + H2O = phosphoethanolamine + 1,2-di-(9Z-octadecenoyl)-sn-glycerol + H(+). It carries out the reaction 1,2-dihexadecanoyl-sn-glycero-3-phosphoethanolamine + H2O = 1,2-dihexadecanoyl-sn-glycerol + phosphoethanolamine + H(+). It catalyses the reaction a 1,2-diacyl-sn-glycero-3-phospho-L-serine + H2O = O-phospho-L-serine + a 1,2-diacyl-sn-glycerol + H(+). The catalysed reaction is a 1,2-diacyl-sn-glycero-3-phosphoglycerol + H2O = glycerol 1-phosphate + a 1,2-diacyl-sn-glycerol + H(+). The enzyme catalyses a 1,2-diacyl-sn-glycero-3-phospho-(1D-myo-inositol) + H2O = 1D-myo-inositol 1-phosphate + a 1,2-diacyl-sn-glycerol + H(+). It carries out the reaction a sphingomyelin + H2O = phosphocholine + an N-acylsphing-4-enine + H(+). It catalyses the reaction a 1-O-(1Z-alkenyl)-2-acyl-sn-glycero-3-phosphoethanolamine + H2O = a 1-O-(1Z-alkenyl)-2-acyl-sn-glycerol + phosphoethanolamine + H(+). Enzymatic activity of LmPC-PLC can be specifically inhibited by its propeptide added in trans. The tendency of the enzyme to oligomerize, which appears to largely attenuate the enzymatic activity, may be one of the mechanisms regulating phospholipase activity in the host cell during the different steps of the infection cycle of L.monocytogenes. Enzyme activity is inhibited by EDTA and o-phenanthroline in vitro. In terms of biological role, major virulence factor whose phospholipase activity facilitates pore formation by the pore-forming toxin listeriolysin O (LLO), leading to vacuolar membrane disruption and vacuolar escape of L.monocytogenes, which enables the bacterium to spread in the host. Acts as a phospholipase C exhibiting broad substrate specificity, with the highest activities towards diacylglycerophospholipids with phosphocholine, phosphoserine, and phosphoethanolamine head groups, but less towards phosphoglycerol or phosphoinositol head groups. Is also able to hydrolyze sphingomyelin and plasmenylethanolamine. This is Phospholipase C from Listeria monocytogenes serovar 1/2a (strain ATCC BAA-679 / EGD-e).